The chain runs to 612 residues: DNA mismatch repair protein MutL (612 aa).

This sequence belongs to the DNA mismatch repair MutL/HexB family.

Functionally, this protein is involved in the repair of mismatches in DNA. It is required for dam-dependent methyl-directed DNA mismatch repair. May act as a 'molecular matchmaker', a protein that promotes the formation of a stable complex between two or more DNA-binding proteins in an ATP-dependent manner without itself being part of a final effector complex. This Afipia carboxidovorans (strain ATCC 49405 / DSM 1227 / KCTC 32145 / OM5) (Oligotropha carboxidovorans) protein is DNA mismatch repair protein MutL.